The primary structure comprises 646 residues: Peptidylprolyl isomerase domain and WD repeat-containing protein 1 (646 aa).

A disordered region spans residues 1-50; sequence MATESGSDSQLRRRRRRDPEGSEKTELSEREPALAVAGSEENDDENEERW. Alanine 2 bears the N-acetylalanine mark. Basic and acidic residues predominate over residues 17–32; the sequence is RDPEGSEKTELSEREP. WD repeat units lie at residues 88–126, 131–170, 221–260, and 278–319; these read MHRD…IEFV, SHLG…MINM, LHVS…YKFP, and KCKA…RVFD. Residues 490–645 form the PPIase cyclophilin-type domain; it reads VSDSAIVHTS…EDVSIINITV (156 aa).

Belongs to the cyclophilin-type PPIase family. PPIL1 subfamily. In terms of assembly, identified in the spliceosome C complex.

It is found in the nucleus. It carries out the reaction [protein]-peptidylproline (omega=180) = [protein]-peptidylproline (omega=0). Its activity is regulated as follows. Inhibited by cyclosporin A (CsA). Functionally, PPIase that catalyzes the cis-trans isomerization of proline imidic peptide bonds in oligopeptides and may therefore assist protein folding. May be involved in pre-mRNA splicing. This Mus musculus (Mouse) protein is Peptidylprolyl isomerase domain and WD repeat-containing protein 1.